We begin with the raw amino-acid sequence, 318 residues long: Ubiquinol oxidase, mitochondrial (318 aa).

The N-terminal 46 residues, methionine 1–leucine 46, are a transit peptide targeting the mitochondrion. The helical transmembrane segment at alanine 143–leucine 163 threads the bilayer. Residues glutamate 147, glutamate 186, and histidine 189 each coordinate Fe cation. Residues leucine 205–serine 225 form a helical membrane-spanning segment. Residues glutamate 237, glutamate 288, and histidine 291 each contribute to the Fe cation site.

This sequence belongs to the alternative oxidase family. In terms of assembly, homodimer; disulfide-linked. Requires Fe cation as cofactor.

The protein resides in the mitochondrion inner membrane. The enzyme catalyses 2 a ubiquinol + O2 = 2 a ubiquinone + 2 H2O. In terms of biological role, catalyzes the cyanide-resistant oxidation of ubiquinol and the reduction of molecular oxygen to water, but does not translocate protons and consequently is not linked to oxidative phosphorylation. May increase respiration when the cytochrome respiratory pathway is restricted, or in response to low temperatures. This chain is Ubiquinol oxidase, mitochondrial (AOMI 1), found in Mangifera indica (Mango).